Here is a 279-residue protein sequence, read N- to C-terminus: Acyl-[acyl-carrier-protein]--UDP-N-acetylglucosamine O-acyltransferase (279 aa).

The protein belongs to the transferase hexapeptide repeat family. LpxA subfamily. Homotrimer.

It localises to the cytoplasm. It carries out the reaction a (3R)-hydroxyacyl-[ACP] + UDP-N-acetyl-alpha-D-glucosamine = a UDP-3-O-[(3R)-3-hydroxyacyl]-N-acetyl-alpha-D-glucosamine + holo-[ACP]. It participates in glycolipid biosynthesis; lipid IV(A) biosynthesis; lipid IV(A) from (3R)-3-hydroxytetradecanoyl-[acyl-carrier-protein] and UDP-N-acetyl-alpha-D-glucosamine: step 1/6. In terms of biological role, involved in the biosynthesis of lipid A, a phosphorylated glycolipid that anchors the lipopolysaccharide to the outer membrane of the cell. This is Acyl-[acyl-carrier-protein]--UDP-N-acetylglucosamine O-acyltransferase from Mesorhizobium japonicum (strain LMG 29417 / CECT 9101 / MAFF 303099) (Mesorhizobium loti (strain MAFF 303099)).